Reading from the N-terminus, the 1331-residue chain is NPC1-like intracellular cholesterol transporter 1 (1331 aa).

A signal peptide spans Met1–Gly20. Residues Glu21–Pro282 are Extracellular-facing. 9 disulfides stabilise this stretch: Cys32–Cys90, Cys38–Cys56, Cys77–Cys125, Cys91–Cys129, Cys113–Cys254, Cys116–Cys172, Cys189–Cys197, Cys243–Cys259, and Cys256–Cys263. 2 N-linked (GlcNAc...) asparagine glycosylation sites follow: Asn53 and Asn85. A glycan (N-linked (GlcNAc...) asparagine) is linked at Asn138. The N-linked (GlcNAc...) asparagine glycan is linked to Asn244. A helical membrane pass occupies residues Gly283–Val303. Topologically, residues Arg304–Pro352 are cytoplasmic. A helical transmembrane segment spans residues Leu353–Ile373. At Glu374–Asp632 the chain is on the extracellular side. Residues Asn416, Asn431, Asn464, Asn479, Asn497, and Asn506 are each glycosylated (N-linked (GlcNAc...) asparagine). The cysteines at positions 471 and 485 are disulfide-linked. Residues Cys525 and Cys542 are joined by a disulfide bond. Asn606 and Asn626 each carry an N-linked (GlcNAc...) asparagine glycan. An SSD domain is found at Asp632–Leu797. The helical transmembrane segment at Leu633–Ser653 threads the bilayer. At Tyr654–Lys665 the chain is on the cytoplasmic side. Residues Ala666–Phe686 form a helical membrane-spanning segment. Over Tyr687–Leu696 the chain is Extracellular. A helical membrane pass occupies residues Val697–Phe717. At Val718–Ser742 the chain is on the cytoplasmic side. A helical membrane pass occupies residues Val743 to Leu763. Residues Thr764–Ser776 lie on the Extracellular side of the membrane. Residues Gly777–Leu797 form a helical membrane-spanning segment. Residues Asp798–Arg846 are Cytoplasmic-facing. Residues Pro847–Ile867 traverse the membrane as a helical segment. The Extracellular portion of the chain corresponds to Asn868–Gly1113. Asn909 and Asn917 each carry an N-linked (GlcNAc...) asparagine glycan. 3 disulfides stabilise this stretch: Cys920-Cys925, Cys967-Cys1025, and Cys981-Cys990. 3 N-linked (GlcNAc...) asparagine glycosylation sites follow: Asn996, Asn1038, and Asn1076. A helical transmembrane segment spans residues Ile1114–Leu1134. Residues Asp1135–Asn1142 lie on the Cytoplasmic side of the membrane. Residues Leu1143 to Ser1163 traverse the membrane as a helical segment. Residues Tyr1164–Asn1165 lie on the Extracellular side of the membrane. The helical transmembrane segment at Ala1166–Ile1186 threads the bilayer. The Cytoplasmic portion of the chain corresponds to Thr1187–Thr1206. The chain crosses the membrane as a helical span at residues Val1207 to Ile1227. Residues Leu1228–Arg1242 are Extracellular-facing. Residues Leu1243–Leu1263 traverse the membrane as a helical segment. At Ser1264 to Phe1331 the chain is on the cytoplasmic side.

The protein belongs to the patched family. In terms of assembly, interacts with RAB11A, MYO5B and RAB11FIP2. Interaction with RAB11A, MYO5B and RAB11FIP2 is required for proper transport to the plasma membrane upon cholesterol depletion. Interacts with NPC2. Interacts with LIMA1. In terms of processing, highly glycosylated. As to expression, small intestine showed the highest level of expression. Expression in other tissues including gall bladder, liver, testis and stomach is also observed. Along the duodenum-ileum axis, the levels vary in different segments of the intestine with peak expression in the proximal jejunum. Protein expression is confined to the enterocyte. Discrete localization to the epithelial layer bordering the luminal space along the crypt-villus axis. Protein expression in the enterocyte is observed closest to the luminal space. Expression in enterocytes from the proximal (jejunum) but not in the distal (ileum) region.

It is found in the apical cell membrane. The protein resides in the cell membrane. The enzyme catalyses cholesterol(in) = cholesterol(out). It carries out the reaction sitosterol(out) = sitosterol(in). Its function is as follows. Plays a major role in cholesterol homeostasis. Critical for the uptake of cholesterol across the plasma membrane of the intestinal enterocyte. Involved in plant sterol absorption, it transports sitosterol, although at lower rates than cholesterol. Is the direct molecular target of ezetimibe, a drug that inhibits cholesterol absorption and is approved for the treatment of hypercholesterolemia. May have a function in the transport of multiple lipids and their homeostasis, thereby influencing lipid metabolism regulation. May be involved in caveolin trafficking from the plasma membrane. Acts as a negative regulator of NPC2 and down-regulates its expression and secretion by inhibiting its maturation and accelerating its degradation. The chain is NPC1-like intracellular cholesterol transporter 1 from Rattus norvegicus (Rat).